We begin with the raw amino-acid sequence, 501 residues long: Aromatase 3 (501 aa).

Cys-435 lines the heme pocket.

Belongs to the cytochrome P450 family. Heme is required as a cofactor. As to expression, ovary.

Its subcellular location is the membrane. It carries out the reaction testosterone + 3 reduced [NADPH--hemoprotein reductase] + 3 O2 = 17beta-estradiol + formate + 3 oxidized [NADPH--hemoprotein reductase] + 4 H2O + 4 H(+). The enzyme catalyses androst-4-ene-3,17-dione + 3 reduced [NADPH--hemoprotein reductase] + 3 O2 = estrone + formate + 3 oxidized [NADPH--hemoprotein reductase] + 4 H2O + 4 H(+). Catalyzes the formation of aromatic C18 estrogens from C19 androgens. This chain is Aromatase 3 (CYP19A3), found in Sus scrofa (Pig).